The sequence spans 858 residues: DNA mismatch repair protein MutS (858 aa).

Position 611–618 (611–618 (GPNMGGKS)) interacts with ATP.

It belongs to the DNA mismatch repair MutS family.

In terms of biological role, this protein is involved in the repair of mismatches in DNA. It is possible that it carries out the mismatch recognition step. This protein has a weak ATPase activity. The chain is DNA mismatch repair protein MutS from Actinobacillus succinogenes (strain ATCC 55618 / DSM 22257 / CCUG 43843 / 130Z).